The sequence spans 374 residues: Glutamate 5-kinase (374 aa).

Lys-9 is a binding site for ATP. Residues Ser-49, Asp-136, and Asn-148 each coordinate substrate. Residues 168-169 (TD) and 210-216 (TGGMKSK) each bind ATP. The PUA domain occupies 276 to 354 (SGVVRIDQGA…DEAKQLIPLV (79 aa)).

This sequence belongs to the glutamate 5-kinase family.

Its subcellular location is the cytoplasm. The enzyme catalyses L-glutamate + ATP = L-glutamyl 5-phosphate + ADP. Its pathway is amino-acid biosynthesis; L-proline biosynthesis; L-glutamate 5-semialdehyde from L-glutamate: step 1/2. Its function is as follows. Catalyzes the transfer of a phosphate group to glutamate to form L-glutamate 5-phosphate. In Halalkalibacterium halodurans (strain ATCC BAA-125 / DSM 18197 / FERM 7344 / JCM 9153 / C-125) (Bacillus halodurans), this protein is Glutamate 5-kinase.